Here is a 244-residue protein sequence, read N- to C-terminus: Ubiquitin carboxyl-terminal hydrolase mug105 (244 aa).

Cys42 functions as the Nucleophile in the catalytic mechanism. His165 (proton acceptor) is an active-site residue. Asp183 is a catalytic residue.

It belongs to the peptidase C78 family. ZUFSP subfamily.

The protein resides in the cytoplasm. The catalysed reaction is Thiol-dependent hydrolysis of ester, thioester, amide, peptide and isopeptide bonds formed by the C-terminal Gly of ubiquitin (a 76-residue protein attached to proteins as an intracellular targeting signal).. Its function is as follows. Deubiquitinase with endodeubiquitinase activity that preferentially cleaves 'Lys-48'-linked polyubiquitin chains. Shows only weak activity against 'Lys-63' and 'Lys-11'-linked chains. Has a role in meiosis. The polypeptide is Ubiquitin carboxyl-terminal hydrolase mug105 (mug105) (Schizosaccharomyces pombe (strain 972 / ATCC 24843) (Fission yeast)).